A 298-amino-acid chain; its full sequence is GTP-binding protein REM 1 (298 aa).

Residues 1 to 73 (MTLNTEQEAK…DDWSSESSDS (73 aa)) are disordered. Residues 35-55 (TVPSTQSQHPRLGQSASLNPP) show a composition bias toward polar residues. Position 51 is a phosphoserine (Ser-51). Over residues 63–73 (PDDWSSESSDS) the composition is skewed to low complexity. GTP is bound by residues 87 to 94 (GDPGVGKT) and 195 to 198 (NKAD). The calmodulin-binding stretch occupies residues 268–287 (ARRFLARLTARSARRRALKA).

It belongs to the small GTPase superfamily. RGK family. As to quaternary structure, in vitro, interacts with calmodulin in a calcium-dependent manner. Most highly expressed in the endothelial lining of the blood vessels in uterus and heart. Lower levels found in spleen, lymph node, kidney and testis. Also found in cells with secretory function such as the islets of Langerhans, lobule/duct epithelium in the breast, bile duct epithelium in the liver, surface epithelium in the endometrial glands of the uterus, colon mucosa and acinar cells in the pancreas and the prostate.

Its function is as follows. Promotes endothelial cell sprouting and actin cytoskeletal reorganization. May be involved in angiogenesis. May function in Ca(2+) signaling. This chain is GTP-binding protein REM 1 (REM1), found in Homo sapiens (Human).